A 505-amino-acid chain; its full sequence is Maturase K (505 aa).

Belongs to the intron maturase 2 family. MatK subfamily.

The protein resides in the plastid. It localises to the chloroplast. In terms of biological role, usually encoded in the trnK tRNA gene intron. Probably assists in splicing its own and other chloroplast group II introns. This chain is Maturase K, found in Calycanthus floridus (Eastern sweetshrub).